Here is a 90-residue protein sequence, read N- to C-terminus: MKFNIIIVFISLAILVHSSYAANDNDDDPTTTVHPTTTEQPDDKFECPSRFGYFADPKDPHKFYICSNWEAVHKDCPGNTRWNEDEETCT.

An N-terminal signal peptide occupies residues Met1–Ala21. Residues Ala22–Asp42 are disordered. Residues Thr30–Glu39 are compositionally biased toward low complexity. The Chitin-binding type-2 domain occupies Lys44–Thr90. Cystine bridges form between Cys47–Cys66 and Cys76–Cys89. The important for IgE-binding stretch occupies residues Gly52–Thr90.

Monomer. In terms of tissue distribution, expressed in epithelial cells of the midgut.

It is found in the secreted. Its subcellular location is the endoplasmic reticulum. The protein resides in the cytoplasmic vesicle. Its function is as follows. Does not bind chitin in vitro. This Dermatophagoides pteronyssinus (European house dust mite) protein is Major mite allergen Der p 23.